We begin with the raw amino-acid sequence, 112 residues long: uncharacterized protein (112 aa).

This is an uncharacterized protein from Saccharomyces cerevisiae (strain ATCC 204508 / S288c) (Baker's yeast).